A 282-amino-acid chain; its full sequence is tRNA (guanine-N(1)-)-methyltransferase (282 aa).

S-adenosyl-L-methionine is bound by residues Gly157 and Val177–Leu182.

It belongs to the RNA methyltransferase TrmD family. As to quaternary structure, homodimer.

The protein localises to the cytoplasm. The catalysed reaction is guanosine(37) in tRNA + S-adenosyl-L-methionine = N(1)-methylguanosine(37) in tRNA + S-adenosyl-L-homocysteine + H(+). Functionally, specifically methylates guanosine-37 in various tRNAs. The protein is tRNA (guanine-N(1)-)-methyltransferase of Rickettsia bellii (strain RML369-C).